The following is a 115-amino-acid chain: MKFVLLFGVLLVTLFSYSSAEMLDDFDQADEDELLSLIEKEEARAKECTPRFYDCSHDRNSCCRSELFKDVCTCFYPEGGDNEVCTCQQPKHLKYMEKAVDKAKKFGGKIKKWFG.

Residues M1–A20 form the signal peptide. Positions E21–R44 are excised as a propeptide. Intrachain disulfides connect C48-C63, C55-C72, C62-C87, and C74-C85.

The protein belongs to the neurotoxin 19 (CSTX) family. 01 subfamily. Expressed by the venom gland.

It localises to the secreted. The polypeptide is U3-lycotoxin-Ls1f (Lycosa singoriensis (Wolf spider)).